The chain runs to 199 residues: Peptidyl-tRNA hydrolase (199 aa).

Y18 is a tRNA binding site. Catalysis depends on H23, which acts as the Proton acceptor. 3 residues coordinate tRNA: Y72, N74, and N120.

The protein belongs to the PTH family. Monomer.

It localises to the cytoplasm. The catalysed reaction is an N-acyl-L-alpha-aminoacyl-tRNA + H2O = an N-acyl-L-amino acid + a tRNA + H(+). In terms of biological role, hydrolyzes ribosome-free peptidyl-tRNAs (with 1 or more amino acids incorporated), which drop off the ribosome during protein synthesis, or as a result of ribosome stalling. Functionally, catalyzes the release of premature peptidyl moieties from peptidyl-tRNA molecules trapped in stalled 50S ribosomal subunits, and thus maintains levels of free tRNAs and 50S ribosomes. The polypeptide is Peptidyl-tRNA hydrolase (Bifidobacterium adolescentis (strain ATCC 15703 / DSM 20083 / NCTC 11814 / E194a)).